A 336-amino-acid polypeptide reads, in one-letter code: Dihydroorotate dehydrogenase (quinone) (336 aa).

Residues A62–K66 and T86 contribute to the FMN site. Substrate is bound at residue K66. A substrate-binding site is contributed by N111 to F115. FMN contacts are provided by N139 and N172. Substrate is bound at residue N172. Catalysis depends on S175, which acts as the Nucleophile. N177 contacts substrate. 2 residues coordinate FMN: K217 and T245. N246–T247 serves as a coordination point for substrate. FMN contacts are provided by residues G268, G297, and Y318–S319.

It belongs to the dihydroorotate dehydrogenase family. Type 2 subfamily. In terms of assembly, monomer. It depends on FMN as a cofactor.

It localises to the cell membrane. It carries out the reaction (S)-dihydroorotate + a quinone = orotate + a quinol. The protein operates within pyrimidine metabolism; UMP biosynthesis via de novo pathway; orotate from (S)-dihydroorotate (quinone route): step 1/1. Functionally, catalyzes the conversion of dihydroorotate to orotate with quinone as electron acceptor. The sequence is that of Dihydroorotate dehydrogenase (quinone) from Enterobacter sp. (strain 638).